The primary structure comprises 29 residues: Putative membrane protein PmrR (29 aa).

A helical membrane pass occupies residues 5–27 (VYESLTTVFSVLVVSSFLYIWFA).

Its subcellular location is the cell inner membrane. In terms of biological role, may bind to BasS and modulate its sensor kinase activity. The sequence is that of Putative membrane protein PmrR (pmrR) from Escherichia coli (strain K12).